The sequence spans 107 residues: Universal stress protein B homolog (107 aa).

2 helical membrane-spanning segments follow: residues 6–26 (IILF…LTAL) and 86–106 (VREL…AAFL).

The protein belongs to the universal stress protein B family.

It localises to the cell inner membrane. This is Universal stress protein B homolog from Vibrio vulnificus (strain CMCP6).